The chain runs to 214 residues: Ras-like protein 2 (214 aa).

Residues 19–24, 35–41, 65–66, 122–125, and 152–154 contribute to the GTP site; these read GVGKSC, VDEYDPT, AG, NKCD, and SAK. Positions 38 to 46 match the Effector region motif; the sequence is YDPTIEDSY. The interval 178-197 is disordered; the sequence is QGYSTGSGGSNAGGPSNKME. Cysteine 211 carries the post-translational modification Cysteine methyl ester. Residue cysteine 211 is the site of S-farnesyl cysteine attachment. A propeptide spans 212–214 (removed in mature form); the sequence is VLM.

The protein belongs to the small GTPase superfamily. Ras family. In terms of assembly, interacts with farnesyltransferase beta subunit RAM1.

The protein localises to the cell membrane. With respect to regulation, alternates between an inactive form bound to GDP and an active form bound to GTP. Activated by a guanine nucleotide-exchange factor (GEF) and inactivated by a GTPase-activating protein (GAP). Modulates the activity of the adenylate cyclase catalytic subunit and therefore affects the biosynthesis of cyclic-AMP. Plays a role in both surface attachment and surface recognition of appressoria, a highly specialized infection structure for plant penetration. Regulates appressorium formation by coordinated regulation of cAMP signaling and Pmk1 MAPK pathways. The chain is Ras-like protein 2 from Pyricularia oryzae (strain 70-15 / ATCC MYA-4617 / FGSC 8958) (Rice blast fungus).